Reading from the N-terminus, the 118-residue chain is Large ribosomal subunit protein bL12 (118 aa).

Position 1 is an N-acetylmethionine; in form MA2 (Met-1).

This sequence belongs to the bacterial ribosomal protein bL12 family. As to quaternary structure, homodimer. Part of the ribosomal stalk of the 50S ribosomal subunit. Forms a multimeric L10(L12)X complex, where L10 forms an elongated spine to which 2 to 4 L12 dimers bind in a sequential fashion. Binds GTP-bound translation factors. Post-translationally, acetylation of Met-1 converts MA1 to MA2.

Its function is as follows. Forms part of the ribosomal stalk which helps the ribosome interact with GTP-bound translation factors. Is thus essential for accurate translation. The chain is Large ribosomal subunit protein bL12 from Micrococcus luteus (Micrococcus lysodeikticus).